The sequence spans 499 residues: Alpha-amylase A type-3 (499 aa).

An N-terminal signal peptide occupies residues 1 to 21 (MMVAWWSLFLYGLQVAAPALA). A disulfide bridge connects residues Cys51 and Cys59. Substrate is bound at residue Trp104. Residue Asn142 participates in Ca(2+) binding. His143 contributes to the substrate binding site. An intrachain disulfide couples Cys171 to Cys185. Ca(2+)-binding residues include Glu183 and Asp196. Asn218 is a glycosylation site (N-linked (GlcNAc...) asparagine). Arg225 is a substrate binding site. The Ca(2+) site is built by Asp227, His231, and Glu251. Asp227 functions as the Nucleophile in the catalytic mechanism. Substrate is bound at residue 230-231 (KH). Residue Glu251 is the Proton donor of the active site. Position 255 (Gly255) interacts with substrate. Cysteines 261 and 304 form a disulfide. Arg365 contributes to the substrate binding site. Cys461 and Cys496 are disulfide-bonded.

This sequence belongs to the glycosyl hydrolase 13 family. Monomer. The cofactor is Ca(2+).

It localises to the secreted. The catalysed reaction is Endohydrolysis of (1-&gt;4)-alpha-D-glucosidic linkages in polysaccharides containing three or more (1-&gt;4)-alpha-linked D-glucose units.. This is Alpha-amylase A type-3 (amy3) from Aspergillus oryzae (strain ATCC 42149 / RIB 40) (Yellow koji mold).